The chain runs to 99 residues: Small ribosomal subunit protein uS19 (99 aa).

The segment at P76–K99 is disordered.

This sequence belongs to the universal ribosomal protein uS19 family.

Functionally, protein S19 forms a complex with S13 that binds strongly to the 16S ribosomal RNA. The sequence is that of Small ribosomal subunit protein uS19 from Pelodictyon phaeoclathratiforme (strain DSM 5477 / BU-1).